Here is a 269-residue protein sequence, read N- to C-terminus: Expansin-B9 (269 aa).

An N-terminal signal peptide occupies residues 1-24; sequence MGSLANNIMVVGAVLAALVVGGSC. The N-linked (GlcNAc...) asparagine glycan is linked to N34. An Expansin-like EG45 domain is found at 63-169; it reads GGACGIKNVN…RRVRCKYPAG (107 aa). 3 disulfide bridges follow: C66–C94, C97–C164, and C102–C108. Positions 183-264 constitute an Expansin-like CBD domain; the sequence is NYVAVLVKFV…NWRPDAVYTS (82 aa).

This sequence belongs to the expansin family. Expansin B subfamily. As to expression, expressed in anthers and pollen.

The protein localises to the secreted. It localises to the cell wall. It is found in the membrane. Functionally, may aid fertilization by loosening the cell wall of the stigma and style, thereby facilitating penetration of the pollen tube. Acts selectively on grass cell walls, which are relatively poor in pectins and xyloglucans and rich in glucuronoarabinoxylans and (1-3),(1-4)-beta-D-glucans, when compared with cell walls of other angiosperms, including other monocots. This chain is Expansin-B9 (EXPB9), found in Zea mays (Maize).